A 193-amino-acid chain; its full sequence is Protein PATRONUS 1 (193 aa).

The DEN-box motif lies at Asp-14 to Asn-16. The short motif at Arg-46 to Leu-49 is the D-box element.

In terms of assembly, interacts directly with the anaphase promoting complex/cyclosome (APC/C) through the CDC27B and CDC20-1 subunits. Expressed in somatic and reproductive tissues. Expressed in inflorescence, young buds, roots and basal portion of young leaves. Expressed in proliferating cells such as apical meristems of roots and shoots, expanding cotyledons and leaves, root vascular tissues, and in stomatal precursor cells.

It localises to the nucleus. The protein resides in the cytoplasm. Its function is as follows. Required for the maintenance of centromeric cohesion during interkinesis, until meiosis II. Required for regular configuration and segregation of sister chromatids in meiosis II. Also required for centromere cohesion during meiosis I. Involved in spindle organization at the end of telophase I and in meiosis II. Required to prevent precocious release of pericentromeric cohesins during meiosis, but not for cohesion establishment and monopolar orientation of kinetochores at meiosis I. Involved also in somatic development. Regulates mitotic cell division and ploidy stability in somatic cell types. May be involved in the organization of microtubules dynamics. Involved in abiotic stresses and mono- or divalent ions tolerance and may play a role in maintaining meristematic activity under saline conditions. PANS1 and GIG1 are part of a network linking centromere cohesion and cell cycle progression through control of APC/C activity. Regulates the number of dividing cells in root meristem and is necessary for the anaphase onset control through an APC/C-mediated pathway. Involved in maintaining correct chromosome arm cohesion under stress conditions. The polypeptide is Protein PATRONUS 1 (Arabidopsis thaliana (Mouse-ear cress)).